Here is an 839-residue protein sequence, read N- to C-terminus: Taste receptor type 1 member 2 (839 aa).

An N-terminal signal peptide occupies residues 1–19 (MGPRAKTICSLFFLLWVLA). At 20–566 (EPAENSDFYL…VFLEWHEAPT (547 aa)) the chain is on the extracellular side. 9 N-linked (GlcNAc...) asparagine glycosylation sites follow: asparagine 84, asparagine 248, asparagine 292, asparagine 312, asparagine 368, asparagine 407, asparagine 428, asparagine 487, and asparagine 527. Residues 567–587 (IAVALLAALGFLSTLAILVIF) traverse the membrane as a helical segment. The Cytoplasmic segment spans residues 588-602 (WRHFQTPIVRSAGGP). Residues 603–623 (MCFLMLTLLLVAYMVVPVYVG) form a helical membrane-spanning segment. Residues 624-635 (PPKVSTCLCRQA) lie on the Extracellular side of the membrane. A helical transmembrane segment spans residues 636 to 656 (LFPLCFTICISCIAVRSFQIV). Residues 657–681 (CAFKMASRFPRAYSYWVRYQGPYVS) are Cytoplasmic-facing. The chain crosses the membrane as a helical span at residues 682-702 (MAFITVLKMVIVVIGMLATGL). The Extracellular segment spans residues 703 to 727 (SPTTRTDPDDPKITIVSCNPNYRNS). Residues 728-748 (LLFNTSLDLLLSVVGFSFAYM) traverse the membrane as a helical segment. Residues 749–760 (GKELPTNYNEAK) lie on the Cytoplasmic side of the membrane. Residues 761–781 (FITLSMTFYFTSSVSLCTFMS) form a helical membrane-spanning segment. At 782–784 (AYS) the chain is on the extracellular side. Residues 785–805 (GVLVTIVDLLVTVLNLLAISL) form a helical membrane-spanning segment. At 806–839 (GYFGPKCYMILFYPERNTSAYFNSMIQGYTMRRD) the chain is on the cytoplasmic side.

It belongs to the G-protein coupled receptor 3 family. TAS1R subfamily. As to quaternary structure, forms heterodimers with TAS1R3.

It localises to the cell membrane. Its function is as follows. Putative taste receptor. TAS1R2/TAS1R3 recognizes diverse natural and synthetic sweeteners. This chain is Taste receptor type 1 member 2 (TAS1R2), found in Pan troglodytes (Chimpanzee).